The primary structure comprises 668 residues: Threonine--tRNA ligase (668 aa).

One can recognise a TGS domain in the interval 1–64; sequence MSQAISLTFP…TDGKIEIITR (64 aa). The catalytic stretch occupies residues 245 to 553; sequence DHRKLGREMD…LIENFAGHMP (309 aa). Zn(2+)-binding residues include Cys347, His398, and His530.

This sequence belongs to the class-II aminoacyl-tRNA synthetase family. Homodimer. It depends on Zn(2+) as a cofactor.

It localises to the cytoplasm. It carries out the reaction tRNA(Thr) + L-threonine + ATP = L-threonyl-tRNA(Thr) + AMP + diphosphate + H(+). Catalyzes the attachment of threonine to tRNA(Thr) in a two-step reaction: L-threonine is first activated by ATP to form Thr-AMP and then transferred to the acceptor end of tRNA(Thr). Also edits incorrectly charged L-seryl-tRNA(Thr). In Rhizobium etli (strain CIAT 652), this protein is Threonine--tRNA ligase.